The primary structure comprises 222 residues: Ras-related protein Rab11C (222 aa).

22–29 (GDSAVGKT) serves as a coordination point for GTP. The Effector region motif lies at 44–52 (SKATIGVEF). Residues 70–74 (DTAGQ) and 128–131 (NKTD) contribute to the GTP site. Residues Cys219 and Cys220 are each lipidated (S-geranylgeranyl cysteine).

It belongs to the small GTPase superfamily. Rab family.

Its subcellular location is the cell membrane. The sequence is that of Ras-related protein Rab11C (RAB11C) from Nicotiana tabacum (Common tobacco).